Reading from the N-terminus, the 157-residue chain is Ribosomal RNA large subunit methyltransferase H (157 aa).

Residues Leu73, Gly105, and 124-129 (LSRMTF) contribute to the S-adenosyl-L-methionine site.

This sequence belongs to the RNA methyltransferase RlmH family. In terms of assembly, homodimer.

Its subcellular location is the cytoplasm. It carries out the reaction pseudouridine(1915) in 23S rRNA + S-adenosyl-L-methionine = N(3)-methylpseudouridine(1915) in 23S rRNA + S-adenosyl-L-homocysteine + H(+). Functionally, specifically methylates the pseudouridine at position 1915 (m3Psi1915) in 23S rRNA. This Porphyromonas gingivalis (strain ATCC BAA-308 / W83) protein is Ribosomal RNA large subunit methyltransferase H.